The following is a 480-amino-acid chain: Protein nucleotidyltransferase YdiU (480 aa).

ATP contacts are provided by G86, G88, R89, K109, D121, G122, R172, and R179. The Proton acceptor role is filled by D248. Mg(2+)-binding residues include N249 and D258. D258 provides a ligand contact to ATP.

The protein belongs to the SELO family. Requires Mg(2+) as cofactor. Mn(2+) serves as cofactor.

The enzyme catalyses L-seryl-[protein] + ATP = 3-O-(5'-adenylyl)-L-seryl-[protein] + diphosphate. The catalysed reaction is L-threonyl-[protein] + ATP = 3-O-(5'-adenylyl)-L-threonyl-[protein] + diphosphate. It carries out the reaction L-tyrosyl-[protein] + ATP = O-(5'-adenylyl)-L-tyrosyl-[protein] + diphosphate. It catalyses the reaction L-histidyl-[protein] + UTP = N(tele)-(5'-uridylyl)-L-histidyl-[protein] + diphosphate. The enzyme catalyses L-seryl-[protein] + UTP = O-(5'-uridylyl)-L-seryl-[protein] + diphosphate. The catalysed reaction is L-tyrosyl-[protein] + UTP = O-(5'-uridylyl)-L-tyrosyl-[protein] + diphosphate. In terms of biological role, nucleotidyltransferase involved in the post-translational modification of proteins. It can catalyze the addition of adenosine monophosphate (AMP) or uridine monophosphate (UMP) to a protein, resulting in modifications known as AMPylation and UMPylation. This chain is Protein nucleotidyltransferase YdiU, found in Salmonella arizonae (strain ATCC BAA-731 / CDC346-86 / RSK2980).